The following is a 107-amino-acid chain: Putative double-stranded DNA mimic protein HSM_1473 (107 aa).

It belongs to the putative dsDNA mimic protein family.

Its function is as follows. May act as a double-stranded DNA (dsDNA) mimic. Probably regulates the activity of a dsDNA-binding protein. This chain is Putative double-stranded DNA mimic protein HSM_1473, found in Histophilus somni (strain 2336) (Haemophilus somnus).